Reading from the N-terminus, the 1197-residue chain is DNA-directed RNA polymerase subunit beta (1197 aa).

Positions 1172–1185 (KEQEEKKAQQEAEK) are enriched in basic and acidic residues. The segment at 1172-1197 (KEQEEKKAQQEAEKAQAASAEDPSAE) is disordered. A compositionally biased stretch (low complexity) spans 1186–1197 (AQAASAEDPSAE).

This sequence belongs to the RNA polymerase beta chain family. In terms of assembly, the RNAP catalytic core consists of 2 alpha, 1 beta, 1 beta' and 1 omega subunit. When a sigma factor is associated with the core the holoenzyme is formed, which can initiate transcription.

The catalysed reaction is RNA(n) + a ribonucleoside 5'-triphosphate = RNA(n+1) + diphosphate. In terms of biological role, DNA-dependent RNA polymerase catalyzes the transcription of DNA into RNA using the four ribonucleoside triphosphates as substrates. In Latilactobacillus sakei subsp. sakei (strain 23K) (Lactobacillus sakei subsp. sakei), this protein is DNA-directed RNA polymerase subunit beta.